Consider the following 354-residue polypeptide: MEEQTTSLVWIYVNSTEQLNTSYEYNTTYLIEDSDKYQSYVIGLFLSCLYTILLFPIGFIGNILILVVNLNHRGKMAIPDLYFVNLAVADLILVADSLIEVFNLNEKYYDYAVLCTFMSLFLQVNMYSSIFFLTWMSFDRYIALANSMSSSPLRTMQHAKLSCGLIWMASILATLLPFTIVQTQHRGEVHFCFANVFEIQWLEVTIGFLVPFSIIGLCYSLIGRILMRSQKHRGLWPRRQKALRMIVVVVLVFFICWLPENVFISIQLLQGTADPSQRTATTLRHDYPLTGHIVNLAAFSNSCLNPIIYSFLGETFRDKLRLFIKQKASWSVVNRFCHHGLDLHLPVRSEVSEV.

Topologically, residues Met1 to Tyr40 are extracellular. Residues Val41–Gly61 traverse the membrane as a helical segment. The Cytoplasmic portion of the chain corresponds to Asn62–Leu81. A helical transmembrane segment spans residues Tyr82 to Phe102. Residues Asn103–Ala112 are Extracellular-facing. Residues Val113–Leu133 traverse the membrane as a helical segment. The cysteines at positions 115 and 192 are disulfide-linked. Topologically, residues Thr134–Lys160 are cytoplasmic. A helical transmembrane segment spans residues Leu161–Val181. Residues Gln182–Leu202 lie on the Extracellular side of the membrane. Residues Glu203–Gly223 form a helical membrane-spanning segment. Residues Arg224–Met245 lie on the Cytoplasmic side of the membrane. A helical transmembrane segment spans residues Ile246 to Ile266. Topologically, residues Gln267–His292 are extracellular. The helical transmembrane segment at Ile293–Gly313 threads the bilayer. Residues Glu314–Glu353 lie on the Cytoplasmic side of the membrane.

The protein belongs to the G-protein coupled receptor 1 family. In terms of assembly, homodimer. Heterodimer. As to expression, expressed in oocytes (at protein level). Highly expressed in brain, heart, testis and ovary. Weakly expressed in muscle and intestine.

The protein resides in the nucleus. It is found in the cytoplasm. It localises to the perinuclear region. The protein localises to the cytoskeleton. Its subcellular location is the cytoplasmic vesicle membrane. The protein resides in the cell membrane. It is found in the basolateral cell membrane. It localises to the endoplasmic reticulum membrane. The protein localises to the early endosome. Its subcellular location is the recycling endosome. The protein resides in the golgi apparatus. It is found in the trans-Golgi network. It localises to the golgi apparatus membrane. The protein localises to the cell projection. Its subcellular location is the dendrite. The protein resides in the dendritic spine membrane. It is found in the axon. It localises to the postsynaptic density. The protein localises to the mitochondrion membrane. Functionally, membrane G-protein coupled estrogen receptor that binds to 17-beta-estradiol (E2) with high affinity, leading to rapid and transient activation of numerous intracellular signaling pathways. Plays a role in the embryonic development of sensory and motor neurons. May induce apoptosis and reduce proliferation of brain cells. Involved in maintenance of meiotic arrest in oocytes. In Micropogonias undulatus (Atlantic croaker), this protein is G-protein coupled estrogen receptor 1 (gper1).